The primary structure comprises 101 residues: DNA-binding protein Fis (101 aa).

Residues 77-96 (QTRAANMLGINRGTLRKKLK) constitute a DNA-binding region (H-T-H motif).

Belongs to the transcriptional regulatory Fis family. As to quaternary structure, homodimer.

In terms of biological role, activates ribosomal RNA transcription. Plays a direct role in upstream activation of rRNA promoters. This chain is DNA-binding protein Fis, found in Shewanella halifaxensis (strain HAW-EB4).